Consider the following 633-residue polypeptide: Sodium- and chloride-dependent glycine transporter 1 (633 aa).

Residues 1-30 lie on the Cytoplasmic side of the membrane; that stretch reads MGLCVNGAVPSEATKKDENLKRGNWGNQIE. Helical transmembrane passes span 31–51, 58–78, and 113–133; these read FVLT…FPYL, GAFM…LFFM, and YIGI…FASM. Residues 134-208 lie on the Extracellular side of the membrane; that stretch reads NRVLPWTYCN…ISEDIGDFGE (75 aa). N-linked (GlcNAc...) asparagine glycosylation is found at Asn158, Asn164, Asn173, and Asn179. A run of 9 helical transmembrane segments spans residues 209 to 229, 238 to 258, 283 to 303, 330 to 350, 373 to 393, 429 to 449, 453 to 473, 493 to 513, and 533 to 553; these read VQLP…LCLI, VVYF…IRGI, VWGD…GGLI, SVYA…HLGV, LLPI…LLGL, IIGF…WLLL, YAAS…VMYI, LFFQ…ILIF, and ITIG…YAIF. Over 554 to 633 the chain is Cytoplasmic; the sequence is KIWCSEGDTF…GQAHTQDSKV (80 aa). The tract at residues 588–633 is disordered; sequence RYAQMSSTRSESNPEAQPLNPEKMKEDLSLTIQGSNGQAHTQDSKV. Composition is skewed to polar residues over residues 591–602 and 617–633; these read QMSSTRSESNPE and LTIQ…DSKV.

The protein belongs to the sodium:neurotransmitter symporter (SNF) (TC 2.A.22) family. SLC6A9 subfamily. First expressed in early tailbud stage embryos in the midbrain and anterior spinal cord, and weakly in the hindbrain. By late tailbud stages, expression extends posteriorly in the spinal cord to appear in between somites. Expressed in the forebrain, retina, between the somites and in the blood islands by the swimming tadpole stages.

The protein resides in the cell membrane. The catalysed reaction is glycine(out) + chloride(out) + 2 Na(+)(out) = glycine(in) + chloride(in) + 2 Na(+)(in). Functionally, sodium- and chloride-dependent glycine transporter which is essential for regulating glycine concentrations at inhibitory glycinergic synapses. This Xenopus laevis (African clawed frog) protein is Sodium- and chloride-dependent glycine transporter 1.